Here is a 146-residue protein sequence, read N- to C-terminus: MAKVMRKIALDLGTKSCGFAISDPISNSFAIPLENFFFEENNFKKVINKLKHYEKKYEFDTIILGYPLRMTGTRSERSIMVEEFEKLLRKTFSQRIVLVDERLSTVKAKAMLKETNISQSKIKEKKDSMAAALLLNYYLNNFLGVR.

It belongs to the YqgF nuclease family.

The protein resides in the cytoplasm. Its function is as follows. Could be a nuclease involved in processing of the 5'-end of pre-16S rRNA. This chain is Putative pre-16S rRNA nuclease, found in Mycoplasmopsis pulmonis (strain UAB CTIP) (Mycoplasma pulmonis).